The chain runs to 746 residues: Hyperosmolality-gated Ca2+ permeable channel 2.1 (746 aa).

10 helical membrane-spanning segments follow: residues I3–L23, M90–L110, L144–F164, I357–I377, V405–L425, A445–G465, A492–M512, V560–Y580, I601–F621, and L623–F643. A compositionally biased stretch (polar residues) spans L692 to E702. Positions L692 to G723 are disordered. Over residues K708–G723 the composition is skewed to basic and acidic residues.

This sequence belongs to the CSC1 (TC 1.A.17) family.

The protein resides in the membrane. Functionally, acts as an osmosensitive calcium-permeable cation channel. The polypeptide is Hyperosmolality-gated Ca2+ permeable channel 2.1 (Arabidopsis thaliana (Mouse-ear cress)).